The sequence spans 418 residues: MVTLITEKLQNQSLDDLTCKTYNINLYSSEKLNKSGSLFSFEINEDSPWKALNGGCPIQTDARNSAYPFPVCPFSTGPASNGALQWQQEPSSTSMVSGWISELNLNENSGQPLAPPTKRHCRSLSEPDELARCRSPWKPGNSKVWTPVSKRRCNSGGSATLQRCNSHGSATLQRSTSISLPQNILSLNNVFTVTSFNTSPVPRPSSASSGFVDSSEGSTSSSTRWNSGGPCDFNPRRRLSLSQEHITETGNLLPSANSTPTSTPELSRRQGLLRCRSQPCVLNEKKSRLKRRREEDVRWNRPSLDFFKMTRTLKNSKSLCSLDYEDDDDDTQMKTIVSSPCDSNDLMNIITPGSSPMKEQLDEVRHHGSCQGSFKTRDYKKAAAVCESDEDTSDCESTEEGIFPLDCGDLDLEQIENN.

Disordered regions lie at residues T198–R236 and E248–R269. The segment covering S205–G229 has biased composition (low complexity). The segment covering E248 to E265 has biased composition (polar residues). The Nuclear localization signal signature appears at K285–R293.

Belongs to the FAM53 family.

Its subcellular location is the nucleus. In terms of biological role, may play an important role in neural development; the dorsomedial roof of the third ventricle. The chain is Protein FAM53A from Gallus gallus (Chicken).